The following is a 73-amino-acid chain: Defensin-like protein 10 (73 aa).

The N-terminal stretch at 1 to 28 (MKLSLRLISALLMSVMLLFATGMGPVEA) is a signal peptide. 4 disulfides stabilise this stretch: C31-C73, C42-C62, C48-C67, and C52-C69.

It belongs to the DEFL family.

It localises to the secreted. Its function is as follows. Confers broad-spectrum resistance to pathogens. The sequence is that of Defensin-like protein 10 (PDF2.6) from Arabidopsis thaliana (Mouse-ear cress).